The following is a 149-amino-acid chain: D-aminoacyl-tRNA deacylase (149 aa).

The Gly-cisPro motif, important for rejection of L-amino acids signature appears at 137–138 (GP).

The protein belongs to the DTD family. Homodimer.

The protein localises to the cytoplasm. The enzyme catalyses glycyl-tRNA(Ala) + H2O = tRNA(Ala) + glycine + H(+). The catalysed reaction is a D-aminoacyl-tRNA + H2O = a tRNA + a D-alpha-amino acid + H(+). Functionally, an aminoacyl-tRNA editing enzyme that deacylates mischarged D-aminoacyl-tRNAs. Also deacylates mischarged glycyl-tRNA(Ala), protecting cells against glycine mischarging by AlaRS. Acts via tRNA-based rather than protein-based catalysis; rejects L-amino acids rather than detecting D-amino acids in the active site. By recycling D-aminoacyl-tRNA to D-amino acids and free tRNA molecules, this enzyme counteracts the toxicity associated with the formation of D-aminoacyl-tRNA entities in vivo and helps enforce protein L-homochirality. This is D-aminoacyl-tRNA deacylase from Thioalkalivibrio sulfidiphilus (strain HL-EbGR7).